We begin with the raw amino-acid sequence, 369 residues long: Flagellar P-ring protein (369 aa).

The first 24 residues, methionine 1 to alanine 24, serve as a signal peptide directing secretion.

Belongs to the FlgI family. The basal body constitutes a major portion of the flagellar organelle and consists of four rings (L,P,S, and M) mounted on a central rod.

The protein resides in the periplasm. It is found in the bacterial flagellum basal body. Its function is as follows. Assembles around the rod to form the L-ring and probably protects the motor/basal body from shearing forces during rotation. In Ralstonia nicotianae (strain ATCC BAA-1114 / GMI1000) (Ralstonia solanacearum), this protein is Flagellar P-ring protein.